Here is a 104-residue protein sequence, read N- to C-terminus: L-rhamnose mutarotase (104 aa).

Tyr-18 contacts substrate. The active-site Proton donor is His-22. Residues Tyr-41 and 76–77 contribute to the substrate site; that span reads WW.

It belongs to the rhamnose mutarotase family. Homodimer.

It localises to the cytoplasm. It carries out the reaction alpha-L-rhamnose = beta-L-rhamnose. The protein operates within carbohydrate metabolism; L-rhamnose metabolism. Functionally, involved in the anomeric conversion of L-rhamnose. This Escherichia fergusonii (strain ATCC 35469 / DSM 13698 / CCUG 18766 / IAM 14443 / JCM 21226 / LMG 7866 / NBRC 102419 / NCTC 12128 / CDC 0568-73) protein is L-rhamnose mutarotase.